The chain runs to 155 residues: MSQVILDLQLACEDNSGLPEESQFQTWLNAVIPQFQEESEVTIRVVDTAESHSLNLTYRGKDKPTNVLSFPFEVPPGMEMSLLGDLVICRQVVEKEAQEQGKPLEAHWAHMVVHGSLHLLGYDHIEDDEAEEMEALETEIMLALDYEDPYIAEKE.

Positions 114, 118, and 124 each coordinate Zn(2+).

The protein belongs to the endoribonuclease YbeY family. Zn(2+) serves as cofactor.

The protein resides in the cytoplasm. Functionally, single strand-specific metallo-endoribonuclease involved in late-stage 70S ribosome quality control and in maturation of the 3' terminus of the 16S rRNA. This chain is Endoribonuclease YbeY, found in Escherichia coli O1:K1 / APEC.